The following is a 487-amino-acid chain: Betaine aldehyde dehydrogenase (487 aa).

Residues S26 and D93 each coordinate K(+). Residue 150–152 (GAW) coordinates NAD(+). K162 serves as the catalytic Charge relay system. NAD(+)-binding positions include 176–179 (KPSE) and 229–232 (SVPT). L244 is a binding site for K(+). Catalysis depends on E250, which acts as the Proton acceptor. NAD(+) contacts are provided by G252, C284, and E384. C284 serves as the catalytic Nucleophile. The residue at position 284 (C284) is a Cysteine sulfenic acid (-SOH). K454 and G457 together coordinate K(+). The active-site Charge relay system is E461.

This sequence belongs to the aldehyde dehydrogenase family. Dimer of dimers. K(+) is required as a cofactor.

The catalysed reaction is betaine aldehyde + NAD(+) + H2O = glycine betaine + NADH + 2 H(+). It functions in the pathway amine and polyamine biosynthesis; betaine biosynthesis via choline pathway; betaine from betaine aldehyde: step 1/1. Its function is as follows. Involved in the biosynthesis of the osmoprotectant glycine betaine. Catalyzes the irreversible oxidation of betaine aldehyde to the corresponding acid. This chain is Betaine aldehyde dehydrogenase, found in Rhizobium etli (strain ATCC 51251 / DSM 11541 / JCM 21823 / NBRC 15573 / CFN 42).